The chain runs to 862 residues: Piwi-like protein 1 (862 aa).

Basic residues predominate over residues 1 to 13 (MTGRARARARGRA). The tract at residues 1–48 (MTGRARARARGRARGQETVQHVGAAASQQPGYIPPRPQQSPTEGDLVG) is disordered. An Omega-N-methylarginine; by PRMT5; alternate modification is found at arginine 14. Arginine 14 bears the Symmetric dimethylarginine; by PRMT5; alternate mark. An Omega-N-methylarginine; by PRMT5 modification is found at arginine 49. Arginine 53 carries the omega-N-methylarginine; alternate modification. The residue at position 53 (arginine 53) is a Symmetric dimethylarginine; alternate. The short motif at 218–225 (RRLLKIMN) is the D-box element. The 114-residue stretch at 279 to 392 (TVLDFMFNLY…LIPELCYLTG (114 aa)) folds into the PAZ domain. The segment at 317 to 319 (TYR) is required for binding 2'-O-methylated 3'-end of piRNAs. Arginine 371 carries the omega-N-methylarginine; by PRMT5 modification. An MID region region spans residues 480–616 (SKETRGAPLI…LQMNCKMGGE (137 aa)). The region spanning 556–848 (IVVCLLSSNR…LAFLVGQSIH (293 aa)) is the Piwi domain. Active-site residues include aspartate 633, glutamate 671, aspartate 703, and histidine 837.

Belongs to the argonaute family. Piwi subfamily. In terms of assembly, interacts (via Piwi domain) with DICER1, suggesting that it forms ribonucleoprotein RISC complexes; this interaction is regulated by HSP90AB1 activity. Interacts with MAEL, KIF17, PABPC1, PRMT5 and WDR77. Interacts (when methylated on arginine residues) with TDRD1, TDRKH/TDRD2, RNF17/TDRD4, TDRD6, TDRD7 and TDRD9. Interacts with CLOCK. Interacts with MOV10L1. Interacts with ANAPC10; interaction oly takes place following piRNA-binding. Interacts with RNF8; leading to sequester RNF8 in the cytoplasm. Interacts with Tex19.1 and, probably, Tex19.2. Mg(2+) serves as cofactor. In terms of processing, ubiquitinated by the anaphase promoting complex/cyclosome (APC/C) in late spermatids, leading to its degradation. Ubiquitination only takes place following piRNA-binding in adult testis. Ubiquitination and degradation in late spermatogenesis by APC/C is probably required to release RNF8 from the cytoplasm and promote histone to protamine exchange by RNF8. Arginine methylation by PRMT5 is required for the interaction with Tudor domain-containing protein (TDRD1, TDRKH/TDRD2, RNF17/TDRD4, TDRD6, TDRD7 and TDRD9) and subsequent localization to the meiotic nuage, also named P granule. In terms of tissue distribution, expressed in brain. Expressed in testis, specifically in spermatocytes (at protein level). Only detected in germ lineage cells of adult testis. Expressed in male gonads 2 weeks after birth at the initiation of spermatogenesis, but not expressed in female gonads.

It is found in the cytoplasm. Functionally, endoribonuclease that plays a central role in postnatal germ cells by repressing transposable elements and preventing their mobilization, which is essential for the germline integrity. Acts via the piRNA metabolic process, which mediates the repression of transposable elements during meiosis by forming complexes composed of piRNAs and Piwi proteins and governs the methylation and subsequent repression of transposons. Directly binds methylated piRNAs, a class of 24 to 30 nucleotide RNAs that are generated by a Dicer-independent mechanism and are primarily derived from transposons and other repeated sequence elements. Strongly prefers a uridine in the first position of their guide (g1U preference, also named 1U-bias). Not involved in the piRNA amplification loop, also named ping-pong amplification cycle. Acts as an endoribonuclease that cleaves transposon messenger RNAs. Besides their function in transposable elements repression, piRNAs are probably involved in other processes during meiosis such as translation regulation. Probable component of some RISC complex, which mediates RNA cleavage and translational silencing. Also plays a role in the formation of chromatoid bodies and is required for some miRNAs stability. Required to sequester RNF8 in the cytoplasm until late spermatogenesis; RNF8 being released upon ubiquitination and degradation of PIWIL1. This Mus musculus (Mouse) protein is Piwi-like protein 1.